The chain runs to 558 residues: DNA ligase B (558 aa).

The N6-AMP-lysine intermediate role is filled by K124.

Belongs to the NAD-dependent DNA ligase family. LigB subfamily.

It catalyses the reaction NAD(+) + (deoxyribonucleotide)n-3'-hydroxyl + 5'-phospho-(deoxyribonucleotide)m = (deoxyribonucleotide)n+m + AMP + beta-nicotinamide D-nucleotide.. In terms of biological role, catalyzes the formation of phosphodiester linkages between 5'-phosphoryl and 3'-hydroxyl groups in double-stranded DNA using NAD as a coenzyme and as the energy source for the reaction. The polypeptide is DNA ligase B (Klebsiella pneumoniae (strain 342)).